A 489-amino-acid polypeptide reads, in one-letter code: Glutamyl-tRNA(Gln) amidotransferase subunit A (489 aa).

Active-site charge relay system residues include lysine 77 and serine 157. The Acyl-ester intermediate role is filled by serine 181.

Belongs to the amidase family. GatA subfamily. Heterotrimer of A, B and C subunits.

It catalyses the reaction L-glutamyl-tRNA(Gln) + L-glutamine + ATP + H2O = L-glutaminyl-tRNA(Gln) + L-glutamate + ADP + phosphate + H(+). Its function is as follows. Allows the formation of correctly charged Gln-tRNA(Gln) through the transamidation of misacylated Glu-tRNA(Gln) in organisms which lack glutaminyl-tRNA synthetase. The reaction takes place in the presence of glutamine and ATP through an activated gamma-phospho-Glu-tRNA(Gln). This is Glutamyl-tRNA(Gln) amidotransferase subunit A from Caulobacter vibrioides (strain ATCC 19089 / CIP 103742 / CB 15) (Caulobacter crescentus).